The primary structure comprises 711 residues: Myb-like protein B (711 aa).

The span at 24–50 (QPQQSIQQQQQQQQQQQQQQQQQQQQQ) shows a compositional bias: low complexity. 2 disordered regions span residues 24 to 70 (QPQQ…SPQL) and 113 to 235 (NYHT…IINN). Polar residues-rich tracts occupy residues 113-139 (NYHT…SPPT) and 148-157 (TPLSSSTGFS). 2 stretches are compositionally biased toward low complexity: residues 158-187 (NNNN…NNNI) and 198-235 (NNYP…IINN). 2 HTH myb-type domains span residues 428 to 490 (RESI…SPEI) and 491 to 542 (KKGS…SRQT). DNA-binding regions (H-T-H motif) lie at residues 462-486 (WKKI…KRVL) and 514-538 (WKNV…KAIM). Positions 540-598 (RQTEWNQLEDDILTKKIKLMTQNNEKISFQQVSKHLARAKTTKIPRTALECKSRWSQLN) constitute a Myb-like domain. The tract at residues 598–640 (NSTNVNNNNNNNNNSITTSSSNTNQQQQSTMVTPTSSPLSSPI) is disordered.

Its subcellular location is the nucleus. In terms of biological role, transcriptional activator that initiates multicellular development by induction of adenylyl cyclase expression. This is Myb-like protein B (mybB) from Dictyostelium discoideum (Social amoeba).